We begin with the raw amino-acid sequence, 633 residues long: 1-deoxy-D-xylulose-5-phosphate synthase (633 aa).

Residues His-74 and 115-117 (GHA) each bind thiamine diphosphate. Asp-146 is a Mg(2+) binding site. Residues 147-148 (GA), Asn-175, Tyr-286, and Glu-363 contribute to the thiamine diphosphate site. Position 175 (Asn-175) interacts with Mg(2+).

It belongs to the transketolase family. DXPS subfamily. In terms of assembly, homodimer. Mg(2+) serves as cofactor. Requires thiamine diphosphate as cofactor.

The enzyme catalyses D-glyceraldehyde 3-phosphate + pyruvate + H(+) = 1-deoxy-D-xylulose 5-phosphate + CO2. It participates in metabolic intermediate biosynthesis; 1-deoxy-D-xylulose 5-phosphate biosynthesis; 1-deoxy-D-xylulose 5-phosphate from D-glyceraldehyde 3-phosphate and pyruvate: step 1/1. In terms of biological role, catalyzes the acyloin condensation reaction between C atoms 2 and 3 of pyruvate and glyceraldehyde 3-phosphate to yield 1-deoxy-D-xylulose-5-phosphate (DXP). This Dehalococcoides mccartyi (strain ATCC BAA-2100 / JCM 16839 / KCTC 5957 / BAV1) protein is 1-deoxy-D-xylulose-5-phosphate synthase.